A 256-amino-acid chain; its full sequence is 5-oxoprolinase subunit A 3 (256 aa).

This sequence belongs to the LamB/PxpA family. As to quaternary structure, forms a complex composed of PxpA, PxpB and PxpC.

The catalysed reaction is 5-oxo-L-proline + ATP + 2 H2O = L-glutamate + ADP + phosphate + H(+). In terms of biological role, catalyzes the cleavage of 5-oxoproline to form L-glutamate coupled to the hydrolysis of ATP to ADP and inorganic phosphate. The chain is 5-oxoprolinase subunit A 3 from Pseudomonas syringae pv. tomato (strain ATCC BAA-871 / DC3000).